The chain runs to 583 residues: Peptidyl-prolyl cis-trans isomerase FKBP10 (583 aa).

A signal peptide spans 1-27 (MLRAGPPSHTLLRLPLLQLLLLLLVQA). 4 PPIase FKBP-type domains span residues 63 to 151 (GDFV…LDVW), 175 to 263 (SDFV…IDVH), 287 to 375 (GDFM…IDFH), and 400 to 487 (GDFV…VSRE). N-linked (GlcNAc...) asparagine glycans are attached at residues Asn71, Asn183, and Asn295. EF-hand domains follow at residues 498-533 (WHED…QVSE) and 543-578 (DPEK…DQDR). 10 residues coordinate Ca(2+): Asp511, Asn513, Asp515, Glu517, Glu522, Asp556, Asn558, Asp560, Lys562, and Glu567. The disordered stretch occupies residues 534-583 (GKGRLLPGQDPEKTIGDMFQNQDRNQDGKITAEELKLKSDEDQDRVHEEL). Residues 557-583 (RNQDGKITAEELKLKSDEDQDRVHEEL) are compositionally biased toward basic and acidic residues. A Prevents secretion from ER motif is present at residues 580 to 583 (HEEL).

Glycosylated and phosphorylated.

It localises to the endoplasmic reticulum lumen. It catalyses the reaction [protein]-peptidylproline (omega=180) = [protein]-peptidylproline (omega=0). With respect to regulation, inhibited by both FK506 and rapamycin, but not by cyclosporin A. Functionally, PPIases accelerate the folding of proteins during protein synthesis. In Bos taurus (Bovine), this protein is Peptidyl-prolyl cis-trans isomerase FKBP10 (FKBP10).